Consider the following 276-residue polypeptide: Ice-binding protein (276 aa).

A signal peptide spans 1 to 24 (MKILKRIPVLAVLLVGLMTNCSND). Residues 79-82 (TGIT) carry the Ice-binding site motif (T-A/G-X-T/N) 1 motif. Cys-107 and Cys-124 are disulfide-bonded. 2 short sequence motifs (ice-binding site motif (T-A/G-X-T/N)) span residues 245–248 (TGIN) and 263–266 (TAVT).

The protein belongs to the ice-binding protein family. Monomer.

The protein localises to the secreted. Has antifreeze activity for survival in a subzero environment. Binds to the surface of ice crystals and inhibits their growth. Has high thermal hysteresis (TH) activity, which is the ability to lower the freezing point of an aqueous solution below its melting point, and thus the freezing of the cell fluid can be prevented protecting the organism from ice damage. The TH activity of this protein is 2.2 degrees Celsius at 5 uM and 2.5 degrees Celsius at 50 uM. This Flavobacterium frigoris (strain PS1) protein is Ice-binding protein.